A 369-amino-acid polypeptide reads, in one-letter code: MGQHVSNITVIATPQAPETKYLRVEYTGGYDDEYIRFFEAENIHSGDIGSEISPPFCLTRDTTVKQCASFLSPEAKKKFVIVPGEPCKSLSFRPGSILDLQKIPYGTESYVLDGTRCRFINIDYLYTDPDIKRCCNKESDKDCPEIFSNNYETDHCDTIMSSICLQTPGSLPCREWLEKKREVAFDTYMKVCSDHLDANYCSDFVDYTRPDNFGYSDAAILSYCSKHRNNPNCWCVTTPKNDKLFSLELALGPKVCWLHECTDKSKDRKYLLFDQDVQRTNCKYIGCNINVDTLRLRNSVAELIAKCGGSIAEDTVLGDDSYNKEAKLPSFFSIIPVCIVLLCLFVLFYFLRIYDAKVINSNTINVYRK.

Gly-2 carries N-myristoyl glycine; by host lipidation. At 2–330 the chain is on the virion surface side; that stretch reads GQHVSNITVI…SYNKEAKLPS (329 aa). Residues 331 to 351 traverse the membrane as a helical segment; the sequence is FFSIIPVCIVLLCLFVLFYFL. The Intravirion portion of the chain corresponds to 352 to 369; it reads RIYDAKVINSNTINVYRK.

Belongs to the poxviridae A16/G9/J5 family. Part of a stable entry-fusion complex (EFC) which is at least composed of proteins A16, A21, A28, G3, G9, H2, J5, and L5. Formation of the viral membrane is necessary for the assembly of the complex. Interacts with G9. Post-translationally, most cysteines are linked by disulfide bonds. They are created by the viral disulfide bond formation pathway, a poxvirus-specific redox pathway that operates on the cytoplasmic side of the MV membranes.

It is found in the virion membrane. In terms of biological role, envelope protein part of the entry-fusion complex responsible for the virus membrane fusion with host cell membrane during virus entry. Also plays a role in cell-cell fusion (syncytium formation). This chain is Virion membrane protein A16 homolog, found in Fowlpox virus (strain NVSL) (FPV).